The primary structure comprises 339 residues: Ketol-acid reductoisomerase (NADP(+)) (339 aa).

One can recognise a KARI N-terminal Rossmann domain in the interval 1–182 (MRVYYDRDAD…GGGRSGIIET (182 aa)). NADP(+) is bound by residues 24–27 (YGSQ), Arg48, Ser51, Thr53, and 83–86 (DELQ). His108 is an active-site residue. Residue Gly134 coordinates NADP(+). A KARI C-terminal knotted domain is found at 183-328 (SFREECETDL…EKLRAMMPWI (146 aa)). Asp191, Glu195, Glu227, and Glu231 together coordinate Mg(2+). Ser252 contacts substrate.

Belongs to the ketol-acid reductoisomerase family. Mg(2+) is required as a cofactor.

The catalysed reaction is (2R)-2,3-dihydroxy-3-methylbutanoate + NADP(+) = (2S)-2-acetolactate + NADPH + H(+). The enzyme catalyses (2R,3R)-2,3-dihydroxy-3-methylpentanoate + NADP(+) = (S)-2-ethyl-2-hydroxy-3-oxobutanoate + NADPH + H(+). Its pathway is amino-acid biosynthesis; L-isoleucine biosynthesis; L-isoleucine from 2-oxobutanoate: step 2/4. The protein operates within amino-acid biosynthesis; L-valine biosynthesis; L-valine from pyruvate: step 2/4. Functionally, involved in the biosynthesis of branched-chain amino acids (BCAA). Catalyzes an alkyl-migration followed by a ketol-acid reduction of (S)-2-acetolactate (S2AL) to yield (R)-2,3-dihydroxy-isovalerate. In the isomerase reaction, S2AL is rearranged via a Mg-dependent methyl migration to produce 3-hydroxy-3-methyl-2-ketobutyrate (HMKB). In the reductase reaction, this 2-ketoacid undergoes a metal-dependent reduction by NADPH to yield (R)-2,3-dihydroxy-isovalerate. The sequence is that of Ketol-acid reductoisomerase (NADP(+)) from Paramagnetospirillum magneticum (strain ATCC 700264 / AMB-1) (Magnetospirillum magneticum).